Consider the following 262-residue polypeptide: Adenosylcobinamide-GDP ribazoletransferase (262 aa).

7 helical membrane passes run Ser-37–Ser-57, Met-58–Leu-78, Val-112–Tyr-132, Ile-139–Leu-159, Ala-183–Val-203, Val-205–Trp-225, and Val-237–His-257.

This sequence belongs to the CobS family. Mg(2+) serves as cofactor.

Its subcellular location is the cell membrane. It carries out the reaction alpha-ribazole + adenosylcob(III)inamide-GDP = adenosylcob(III)alamin + GMP + H(+). The catalysed reaction is alpha-ribazole 5'-phosphate + adenosylcob(III)inamide-GDP = adenosylcob(III)alamin 5'-phosphate + GMP + H(+). It participates in cofactor biosynthesis; adenosylcobalamin biosynthesis; adenosylcobalamin from cob(II)yrinate a,c-diamide: step 7/7. Its function is as follows. Joins adenosylcobinamide-GDP and alpha-ribazole to generate adenosylcobalamin (Ado-cobalamin). Also synthesizes adenosylcobalamin 5'-phosphate from adenosylcobinamide-GDP and alpha-ribazole 5'-phosphate. In Geobacillus thermodenitrificans (strain NG80-2), this protein is Adenosylcobinamide-GDP ribazoletransferase.